A 246-amino-acid chain; its full sequence is 1-(5-phosphoribosyl)-5-[(5-phosphoribosylamino)methylideneamino] imidazole-4-carboxamide isomerase (246 aa).

Residue Asp-8 is the Proton acceptor of the active site. Asp-131 (proton donor) is an active-site residue.

The protein belongs to the HisA/HisF family.

Its subcellular location is the cytoplasm. It catalyses the reaction 1-(5-phospho-beta-D-ribosyl)-5-[(5-phospho-beta-D-ribosylamino)methylideneamino]imidazole-4-carboxamide = 5-[(5-phospho-1-deoxy-D-ribulos-1-ylimino)methylamino]-1-(5-phospho-beta-D-ribosyl)imidazole-4-carboxamide. The protein operates within amino-acid biosynthesis; L-histidine biosynthesis; L-histidine from 5-phospho-alpha-D-ribose 1-diphosphate: step 4/9. This chain is 1-(5-phosphoribosyl)-5-[(5-phosphoribosylamino)methylideneamino] imidazole-4-carboxamide isomerase, found in Bordetella bronchiseptica (strain ATCC BAA-588 / NCTC 13252 / RB50) (Alcaligenes bronchisepticus).